The chain runs to 391 residues: 8-amino-7-oxononanoate synthase (391 aa).

108–109 contributes to the pyridoxal 5'-phosphate binding site; it reads GF. His-133 is a binding site for substrate. Residues Ser-180, His-208, and Thr-236 each coordinate pyridoxal 5'-phosphate. Lys-239 is subject to N6-(pyridoxal phosphate)lysine. Thr-353 contacts substrate.

It belongs to the class-II pyridoxal-phosphate-dependent aminotransferase family. BioF subfamily. As to quaternary structure, homodimer. Requires pyridoxal 5'-phosphate as cofactor.

It catalyses the reaction 6-carboxyhexanoyl-[ACP] + L-alanine + H(+) = (8S)-8-amino-7-oxononanoate + holo-[ACP] + CO2. The protein operates within cofactor biosynthesis; biotin biosynthesis. Catalyzes the decarboxylative condensation of pimeloyl-[acyl-carrier protein] and L-alanine to produce 8-amino-7-oxononanoate (AON), [acyl-carrier protein], and carbon dioxide. The chain is 8-amino-7-oxononanoate synthase from Thermosipho melanesiensis (strain DSM 12029 / CIP 104789 / BI429).